The chain runs to 105 residues: MSSPPKEKTETRAGHLPAVKAGGMRIVQKHQSAIEVPDKKDDKDSTEYETVIPPKLPVVVSGVVTKGDKDFTPAAAQVAHQKPVPSAQKLPAGQHLNQHIHQPRK.

The disordered stretch occupies residues 75-105 (AAQVAHQKPVPSAQKLPAGQHLNQHIHQPRK). Polar residues predominate over residues 95-105 (HLNQHIHQPRK).

Belongs to the DAP-DAPL1 family. In terms of assembly, associates with ribosomes; inhibiting translation. Interacts with eiF5a (eif5a and eif5a2); inhibiting translation.

Functionally, ribosome-binding protein involved in ribosome hibernation, a process during which ribosomes are stabilized in an inactive state and preserved from proteasomal degradation. Acts via its association with eiF5a (eif5a and eif5a2) at the polypeptide exit tunnel of the ribosome, preventing mRNA translation. Involved in ribosome hibernation in the mature egg by preventing mRNA translation, leading to ribosome inactivation. Ribosomes, which are produced in large quantities during oogenesis, are stored and translationally repressed in the egg and early embryo. Compared to dap1b, binds and inactivates ribosomes less efficiently. This is Death-associated protein 1 homolog from Danio rerio (Zebrafish).